The sequence spans 30 residues: Poly-His-poly-Gly peptide 2 (30 aa).

Basic residues predominate over residues 1 to 18 (EDDHDHHHHHHHHHHHHG). The interval 1-30 (EDDHDHHHHHHHHHHHHGVGGGGGGGGGGA) is disordered. Residues 19–30 (VGGGGGGGGGGA) show a composition bias toward gly residues.

Expressed by the venom gland.

Its subcellular location is the secreted. In terms of biological role, may serve as a metalloproteinase inhibitor during glandular storage. Their inhibition may be instantly disengaged, by dilution or physiochemical change, when venom is injected into tissue of the victim. The protein is Poly-His-poly-Gly peptide 2 of Atheris nitschei (Great lakes bush viper).